Reading from the N-terminus, the 277-residue chain is Shikimate dehydrogenase (NADP(+)) (277 aa).

Shikimate-binding positions include 19–21 and threonine 66; that span reads SKS. Lysine 70 serves as the catalytic Proton acceptor. Position 82 (aspartate 82) interacts with NADP(+). Residues asparagine 91 and aspartate 107 each contribute to the shikimate site. Residues 133–137, 157–162, and leucine 222 contribute to the NADP(+) site; these read GAGGA and NRTRAR. Residue tyrosine 224 participates in shikimate binding. An NADP(+)-binding site is contributed by glycine 245.

It belongs to the shikimate dehydrogenase family. In terms of assembly, homodimer.

The enzyme catalyses shikimate + NADP(+) = 3-dehydroshikimate + NADPH + H(+). The protein operates within metabolic intermediate biosynthesis; chorismate biosynthesis; chorismate from D-erythrose 4-phosphate and phosphoenolpyruvate: step 4/7. Functionally, involved in the biosynthesis of the chorismate, which leads to the biosynthesis of aromatic amino acids. Catalyzes the reversible NADPH linked reduction of 3-dehydroshikimate (DHSA) to yield shikimate (SA). In Roseobacter denitrificans (strain ATCC 33942 / OCh 114) (Erythrobacter sp. (strain OCh 114)), this protein is Shikimate dehydrogenase (NADP(+)).